A 286-amino-acid polypeptide reads, in one-letter code: MATKLPTTDIRIGAELIRRRKGGVPLVCLTAYTYPVARLLDPHVDLLLVGDSVSMVLHGHATTLGASLGMMIAHGQAVMRGSARACVVVDMPAGSYEDSAAQAVASARRIVDETGCQAVKLEGGVDMAGQIAAIAAAGIPVMGHIGLLPQSVEKDGGYKIKGRTDETVAALMADARAVEKAGAFSVVIEGTIEAVAADITRRIAIPTIGIGASGDCDGQILVIDDMVGLTVDRVPKFVKEYADLRSVIANAAERYAAEVRDRTFPGPSHVFSGSKASSDLNGGDES.

2 residues coordinate Mg(2+): Asp-51 and Asp-90. Residues 51-52 (DS), Asp-90, and Lys-120 each bind 3-methyl-2-oxobutanoate. Mg(2+) is bound at residue Glu-122. The active-site Proton acceptor is the Glu-189. A disordered region spans residues 263–286 (TFPGPSHVFSGSKASSDLNGGDES).

Belongs to the PanB family. In terms of assembly, homodecamer; pentamer of dimers. Requires Mg(2+) as cofactor.

It localises to the cytoplasm. The enzyme catalyses 3-methyl-2-oxobutanoate + (6R)-5,10-methylene-5,6,7,8-tetrahydrofolate + H2O = 2-dehydropantoate + (6S)-5,6,7,8-tetrahydrofolate. It participates in cofactor biosynthesis; (R)-pantothenate biosynthesis; (R)-pantoate from 3-methyl-2-oxobutanoate: step 1/2. Catalyzes the reversible reaction in which hydroxymethyl group from 5,10-methylenetetrahydrofolate is transferred onto alpha-ketoisovalerate to form ketopantoate. The protein is 3-methyl-2-oxobutanoate hydroxymethyltransferase of Mesorhizobium japonicum (strain LMG 29417 / CECT 9101 / MAFF 303099) (Mesorhizobium loti (strain MAFF 303099)).